A 620-amino-acid chain; its full sequence is Glutathione-regulated potassium-efflux system protein KefC (620 aa).

Helical transmembrane passes span 4–24 (HTLL…PIAV), 26–46 (LGLG…PWGL), 54–74 (SILH…GLEL), 90–110 (GALQ…FLGL), 114–134 (VAEL…MQAM), 149–169 (FAVL…IPLL), 178–198 (LGAF…VVLL), 218–238 (VFSA…EEVG), 270–290 (GLLL…GTLV), 294–314 (LRIL…LWLV), 327–347 (WFAV…GAAQ), and 359–379 (ALTL…VLLT). One can recognise an RCK N-terminal domain in the interval 399–518 (QPRVIVAGFG…AGVAMPERET (120 aa)). The segment at 599 to 620 (QGTAEGKHSGEAADEPEVKPSI) is disordered.

It belongs to the monovalent cation:proton antiporter 2 (CPA2) transporter (TC 2.A.37) family. KefC subfamily. In terms of assembly, homodimer. Interacts with the regulatory subunit KefF.

Its subcellular location is the cell inner membrane. Pore-forming subunit of a potassium efflux system that confers protection against electrophiles. Catalyzes K(+)/H(+) antiport. The polypeptide is Glutathione-regulated potassium-efflux system protein KefC (Salmonella choleraesuis (strain SC-B67)).